The sequence spans 262 residues: LOB domain-containing protein 18 (262 aa).

The 103-residue stretch at 36 to 138 (GPCGACKFLR…AEVSYLQAHL (103 aa)) folds into the LOB domain. Positions 223–262 (VGLGGENSHDLQALAHELLHRQGSPPPAATDHSPSRTMSR) are disordered.

It belongs to the LOB domain-containing protein family. Homodimer and heterodimer with LBD16. Interacts with GIP1. As to expression, expressed in roots, stems, leaves and flowers. Expressed in vascular tissues of hypocotyls, leaves, roots, developing floral organs and siliques.

It localises to the nucleus. Its function is as follows. Involved in the positive regulation of tracheary element (TE) differentiation. Involved in a positive feedback loop that maintains or promotes NAC030/VND7 expression that regulates TE differentiation-related genes. Functions in the initiation and emergence of lateral roots, in conjunction with LBD16, downstream of ARF7 and ARF19. Transcriptional activator that directly regulates EXPA14, a gene encoding a cell wall-loosening factor that promotes lateral root emergence. Activates EXPA14 by directly binding to a specific region of its promoter. Transcriptional activator that directly regulates EXPA17, a gene encoding a cell wall-loosening factor that promotes lateral root emergence. Acts downstream of the auxin influx carriers AUX1 and LAX1 in the regulation of lateral root initiation and development. In Arabidopsis thaliana (Mouse-ear cress), this protein is LOB domain-containing protein 18 (LBD18).